The primary structure comprises 277 residues: Multiple sugar-binding transport system permease protein MsmG (277 aa).

6 helical membrane passes run 13 to 33 (YVLLTVGGILILIPLMVTVFS), 74 to 94 (VITVLSVLVVMLFIPAAAYSI), 110 to 130 (LLILGIFVPFQVIMIPITVMM), 141 to 161 (LIILYLTYAIPQTLFLYVGYI), 198 to 218 (TTLIINALWFWNDFMLPLLIL), and 243 to 263 (GPSFASYIVGIITITIVYLIF). Residues 69–263 (FWNSTVITVL…ITITIVYLIF (195 aa)) enclose the ABC transmembrane type-1 domain.

The protein belongs to the binding-protein-dependent transport system permease family. MalFG subfamily.

The protein resides in the cell membrane. Functionally, involved in a binding protein-dependent transport system responsible for the uptake of melibiose, raffinose and isomaltotriose. This is Multiple sugar-binding transport system permease protein MsmG (msmG) from Streptococcus mutans serotype c (strain ATCC 700610 / UA159).